The chain runs to 117 residues: Large ribosomal subunit protein bL20 (117 aa).

Belongs to the bacterial ribosomal protein bL20 family.

Its function is as follows. Binds directly to 23S ribosomal RNA and is necessary for the in vitro assembly process of the 50S ribosomal subunit. It is not involved in the protein synthesizing functions of that subunit. This chain is Large ribosomal subunit protein bL20, found in Pelobacter propionicus (strain DSM 2379 / NBRC 103807 / OttBd1).